The primary structure comprises 309 residues: Homoserine O-succinyltransferase (309 aa).

Cysteine 142 (acyl-thioester intermediate) is an active-site residue. The substrate site is built by lysine 163 and serine 192. Residue histidine 235 is the Proton acceptor of the active site. Glutamate 237 is an active-site residue. Residue arginine 249 participates in substrate binding.

This sequence belongs to the MetA family. Homodimer.

Its subcellular location is the cytoplasm. The catalysed reaction is L-homoserine + succinyl-CoA = O-succinyl-L-homoserine + CoA. The protein operates within amino-acid biosynthesis; L-methionine biosynthesis via de novo pathway; O-succinyl-L-homoserine from L-homoserine: step 1/1. Its function is as follows. Transfers a succinyl group from succinyl-CoA to L-homoserine, forming succinyl-L-homoserine. The chain is Homoserine O-succinyltransferase from Escherichia coli O139:H28 (strain E24377A / ETEC).